A 505-amino-acid chain; its full sequence is Zealexin A1 synthase (505 aa).

A helical transmembrane segment spans residues 7-26; that stretch reads IAVGTVAVVAVLSKLKSAVT. Position 442 (C442) interacts with heme.

Belongs to the cytochrome P450 family. Requires heme as cofactor.

The protein resides in the membrane. The enzyme catalyses (S)-beta-macrocarpene + 3 reduced [NADPH--hemoprotein reductase] + 3 O2 = zealexin A1 + 3 oxidized [NADPH--hemoprotein reductase] + 4 H2O + 4 H(+). Involved in production of the antifungal phytoalexin zealexin A1. The enzyme sequentially oxidizes(S)-beta-macrocarpene via alcohol and aldehyde intermediates to form zealexin A1, a maize phytoalexin that provides biochemical protection against fungal infection. The chain is Zealexin A1 synthase from Zea mays (Maize).